Reading from the N-terminus, the 129-residue chain is Small ribosomal subunit protein uS8 (129 aa).

The protein belongs to the universal ribosomal protein uS8 family. In terms of assembly, part of the 30S ribosomal subunit.

Functionally, one of the primary rRNA binding proteins, it binds directly to 16S rRNA central domain where it helps coordinate assembly of the platform of the 30S subunit. The polypeptide is Small ribosomal subunit protein uS8 (Nanoarchaeum equitans (strain Kin4-M)).